We begin with the raw amino-acid sequence, 191 residues long: MYILFEGIDTCGKSTQMELLTQKHPGIITTHEPGGTAFGQQAREILLSDSLRSKRAELLLFLADRAEHYEEVVEPNHDKIVVSDRGFVSGIGYALANGDFDFDELVALNRFALKDHFPDRIILFMTDMETLKQRISEKELDGIELRGLEYLLRVQEHMKESILKLGIPHLFIDATDSIENIHQSILTYLKV.

7 to 14 (GIDTCGKS) lines the ATP pocket.

It belongs to the thymidylate kinase family.

It catalyses the reaction dTMP + ATP = dTDP + ADP. Phosphorylation of dTMP to form dTDP in both de novo and salvage pathways of dTTP synthesis. This chain is Thymidylate kinase, found in Sulfurovum sp. (strain NBC37-1).